The sequence spans 392 residues: Formate-dependent phosphoribosylglycinamide formyltransferase (392 aa).

Residues 20-21 and Glu80 contribute to the N(1)-(5-phospho-beta-D-ribosyl)glycinamide site; that span reads EL. Residues Arg112, Lys153, 158–163, 193–196, and Glu201 each bind ATP; these read SSGKGQ and EGFV. In terms of domain architecture, ATP-grasp spans 117 to 306; that stretch reads RLAAEELGLP…EFALHVRAIL (190 aa). Mg(2+) is bound by residues Glu265 and Glu277. Residues Asp284, Lys355, and 362–363 each bind N(1)-(5-phospho-beta-D-ribosyl)glycinamide; that span reads RR.

The protein belongs to the PurK/PurT family. As to quaternary structure, homodimer.

The catalysed reaction is N(1)-(5-phospho-beta-D-ribosyl)glycinamide + formate + ATP = N(2)-formyl-N(1)-(5-phospho-beta-D-ribosyl)glycinamide + ADP + phosphate + H(+). Its pathway is purine metabolism; IMP biosynthesis via de novo pathway; N(2)-formyl-N(1)-(5-phospho-D-ribosyl)glycinamide from N(1)-(5-phospho-D-ribosyl)glycinamide (formate route): step 1/1. Functionally, involved in the de novo purine biosynthesis. Catalyzes the transfer of formate to 5-phospho-ribosyl-glycinamide (GAR), producing 5-phospho-ribosyl-N-formylglycinamide (FGAR). Formate is provided by PurU via hydrolysis of 10-formyl-tetrahydrofolate. The protein is Formate-dependent phosphoribosylglycinamide formyltransferase of Aeromonas salmonicida (strain A449).